The primary structure comprises 771 residues: Probable aconitate hydratase, mitochondrial (771 aa).

Substrate contacts are provided by residues Q86 and 179 to 181 (DSH). Residues C372, C435, and C438 each coordinate [4Fe-4S] cluster. Residues R461, R466, R594, and 657–658 (SR) contribute to the substrate site.

Belongs to the aconitase/IPM isomerase family. In terms of assembly, monomer. The cofactor is [4Fe-4S] cluster.

Its subcellular location is the mitochondrion. It carries out the reaction citrate = D-threo-isocitrate. It functions in the pathway carbohydrate metabolism; tricarboxylic acid cycle; isocitrate from oxaloacetate: step 2/2. Functionally, catalyzes the isomerization of citrate to isocitrate via cis-aconitate. In Dictyostelium discoideum (Social amoeba), this protein is Probable aconitate hydratase, mitochondrial (aco2).